We begin with the raw amino-acid sequence, 405 residues long: Pre-mRNA-splicing factor cwc-24 (405 aa).

2 disordered regions span residues 1 to 114 and 162 to 184; these read MADT…NTIY and TKKKVGGEDDAVQNSEREPDGTY. The segment covering 15–29 has biased composition (low complexity); sequence EPTTATPTAPIAPVA. The segment covering 31 to 46 has biased composition (basic residues); sequence FKKRGAKGKANLRKRP. Positions 56-70 are enriched in acidic residues; sequence SDDDSSDFESSEDEA. The segment covering 74 to 83 has biased composition (basic residues); sequence RIKRRKKNHH. A C3H1-type zinc finger spans residues 221 to 249; that stretch reads DMAPDVCKDYKQTGFCGFGDNCKFLHARE. The RING-type zinc-finger motif lies at 310-349; it reads CIICRGPYSNSPVVTRCGHYFCEACALKRYRKDPSCAACG. Positions 370-386 are enriched in basic and acidic residues; that stretch reads KARAERLRREARERGEE. The tract at residues 370–405 is disordered; sequence KARAERLRREARERGEEVSEEEDEGEDEGEGAEGSD. Residues 387-405 are compositionally biased toward acidic residues; it reads VSEEEDEGEDEGEGAEGSD.

Belongs to the CWC24 family. As to quaternary structure, associated with the spliceosome.

The protein resides in the nucleus. Functionally, involved in pre-mRNA splicing. This is Pre-mRNA-splicing factor cwc-24 (cwc-24) from Neurospora crassa (strain ATCC 24698 / 74-OR23-1A / CBS 708.71 / DSM 1257 / FGSC 987).